The chain runs to 316 residues: uncharacterized protein (316 aa).

In terms of domain architecture, HTH lacI-type spans 1–56; sequence MATLSDVAKKANVSKMTVSRVINHPETVTDELKKLVHSAMKELNYIPNYAARALVQ. The segment at residues 4–23 is a DNA-binding region (H-T-H motif); the sequence is LSDVAKKANVSKMTVSRVIN.

This is an uncharacterized protein from Bacillus subtilis (strain 168).